The sequence spans 266 residues: rRNA adenine N-6-methyltransferase (266 aa).

The S-adenosyl-L-methionine site is built by histidine 14, threonine 16, glycine 41, glutamate 62, aspartate 87, and asparagine 103.

It belongs to the class I-like SAM-binding methyltransferase superfamily. rRNA adenine N(6)-methyltransferase family.

Involved in erythromycin resistance. This is rRNA adenine N-6-methyltransferase (ermF) from Bacteroides fragilis.